The primary structure comprises 388 residues: 1-deoxy-D-xylulose 5-phosphate reductoisomerase (388 aa).

5 residues coordinate NADPH: threonine 15, glycine 16, serine 17, isoleucine 18, and asparagine 127. Lysine 128 is a binding site for 1-deoxy-D-xylulose 5-phosphate. An NADPH-binding site is contributed by glutamate 129. Aspartate 153 lines the Mn(2+) pocket. 1-deoxy-D-xylulose 5-phosphate-binding residues include serine 154, glutamate 155, serine 179, and histidine 202. Glutamate 155 is a binding site for Mn(2+). Glycine 208 serves as a coordination point for NADPH. 1-deoxy-D-xylulose 5-phosphate is bound by residues serine 215, asparagine 220, lysine 221, and glutamate 224. Position 224 (glutamate 224) interacts with Mn(2+).

This sequence belongs to the DXR family. Requires Mg(2+) as cofactor. Mn(2+) serves as cofactor.

The catalysed reaction is 2-C-methyl-D-erythritol 4-phosphate + NADP(+) = 1-deoxy-D-xylulose 5-phosphate + NADPH + H(+). The protein operates within isoprenoid biosynthesis; isopentenyl diphosphate biosynthesis via DXP pathway; isopentenyl diphosphate from 1-deoxy-D-xylulose 5-phosphate: step 1/6. In terms of biological role, catalyzes the NADPH-dependent rearrangement and reduction of 1-deoxy-D-xylulose-5-phosphate (DXP) to 2-C-methyl-D-erythritol 4-phosphate (MEP). In Bacteroides fragilis (strain ATCC 25285 / DSM 2151 / CCUG 4856 / JCM 11019 / LMG 10263 / NCTC 9343 / Onslow / VPI 2553 / EN-2), this protein is 1-deoxy-D-xylulose 5-phosphate reductoisomerase.